Here is a 294-residue protein sequence, read N- to C-terminus: S-adenosylmethionine uptake transporter (294 aa).

The next 10 membrane-spanning stretches (helical) occupy residues 4–24, 41–61, 74–91, 98–118, 121–141, 148–168, 178–198, 207–227, 237–257, and 260–280; these read ALKT…TSSI, VAFF…VYYG, VLRG…TYGL, TATV…VFIL, NIIW…VVML, FNPE…LDII, MLSM…PVAM, FELA…FFLL, ATAP…YFIF, and FPDK…LFII. EamA domains lie at 22-141 and 160-280; these read SSIN…VVML and ISFA…LFII.

The protein belongs to the drug/metabolite transporter (DMT) superfamily. 10 TMS drug/metabolite exporter (DME) (TC 2.A.7.3) family.

It is found in the cell inner membrane. Transport is inhibited by S-adenosylethionine and to a lesser extent by S-adenosylhomocysteine. Unlike eukaryotic transporters is not inhibited by sinfungin. Also inhibited by 2.4-dinitrophenol, suggesting transport is an energy-dependent process. Its function is as follows. Transports S-adenosylmethionine. The chain is S-adenosylmethionine uptake transporter (sam) from Rickettsia prowazekii (strain Madrid E).